The following is a 472-amino-acid chain: D-inositol 3-phosphate glycosyltransferase (472 aa).

H48 is a 1D-myo-inositol 3-phosphate binding site. UDP-N-acetyl-alpha-D-glucosamine contacts are provided by residues 54 to 55 and G62; that span reads QP. 1D-myo-inositol 3-phosphate-binding positions include 59-64, K117, Y150, T174, and R194; that span reads DAGGMN. Residues R282, K287, and V348 each contribute to the UDP-N-acetyl-alpha-D-glucosamine site. F357, R358, and A360 together coordinate Mg(2+). Residues E370 and E378 each contribute to the UDP-N-acetyl-alpha-D-glucosamine site. T384 is a Mg(2+) binding site.

It belongs to the glycosyltransferase group 1 family. MshA subfamily. In terms of assembly, homodimer.

It carries out the reaction 1D-myo-inositol 3-phosphate + UDP-N-acetyl-alpha-D-glucosamine = 1D-myo-inositol 2-acetamido-2-deoxy-alpha-D-glucopyranoside 3-phosphate + UDP + H(+). Its function is as follows. Catalyzes the transfer of a N-acetyl-glucosamine moiety to 1D-myo-inositol 3-phosphate to produce 1D-myo-inositol 2-acetamido-2-deoxy-glucopyranoside 3-phosphate in the mycothiol biosynthesis pathway. This chain is D-inositol 3-phosphate glycosyltransferase, found in Streptomyces griseus subsp. griseus (strain JCM 4626 / CBS 651.72 / NBRC 13350 / KCC S-0626 / ISP 5235).